We begin with the raw amino-acid sequence, 125 residues long: Small ribosomal subunit protein eS8 (125 aa).

The segment at 1–35 (MQWQGRSVRKPSGGRYHTSQGKKRTEIGRAPAETH) is disordered.

Belongs to the eukaryotic ribosomal protein eS8 family. In terms of assembly, part of the 30S ribosomal subunit.

This Methanoculleus marisnigri (strain ATCC 35101 / DSM 1498 / JR1) protein is Small ribosomal subunit protein eS8.